The chain runs to 794 residues: Ubiquitin carboxyl-terminal hydrolase 10 (794 aa).

Ala2 is modified (N-acetylalanine). Residues 2–99 (ALHNPQYIFG…ILGCPTSKKT (98 aa)) form an interaction with p53/TP53 region. The interval 6–21 (PQYIFGDFSPDEFNQF) is G3BP1-binding. Thr24 and Thr99 each carry phosphothreonine. Positions 123 to 164 (ESSSNAEAETLENDSGAGGLGQRERKKKKKRPPGYYSYLKDG) are disordered. Phosphoserine is present on residues Ser209, Ser224, and Ser316. The segment at 303–326 (ESADLDPAKPESQSPPAESALSVS) is disordered. Residues 313 to 326 (ESQSPPAESALSVS) are compositionally biased toward polar residues. At Ser332 the chain carries Phosphoserine; by ATM. Ser361 and Ser366 each carry phosphoserine. Residues 411–791 (RGLINKGNWC…TAYLLYYRRV (381 aa)) form the USP domain. Cys420 serves as the catalytic Nucleophile. Ser543 carries the phosphoserine modification. Residues 546–588 (HEKHSVSNGPGSHLIEDEELEDTGEGSEDEWEQVGPKNKTSVT) are disordered. Acidic residues predominate over residues 561-577 (EDEELEDTGEGSEDEWE). Thr568 bears the Phosphothreonine mark. Position 572 is a phosphoserine (Ser572). Catalysis depends on His745, which acts as the Proton acceptor.

It belongs to the peptidase C19 family. USP10 subfamily. In terms of assembly, found in a deubiquitination complex with TANK, USP10 and ZC3H12A; this complex inhibits genotoxic stress- or interleukin-1-beta (IL1B)-mediated NF-kappa-B activation by promoting IKBKG or TRAF6 deubiquitination. Interacts with IKBKG; this interaction increases in response to DNA damage. Interacts with TANK; this interaction increases in response to DNA damage. Interacts with TRAF6; this interaction increases in response to DNA damage. Interacts with ZC3H12A; this interaction increases in response to DNA damage. Interacts with G3BP1 (via NTF2 domain) and G3BP2 (via NTF2 domain); inhibiting stress granule formation. In terms of processing, phosphorylated by ATM following DNA damage, leading to stabilization and translocation it to the nucleus. Ubiquitinated. Deubiquitinated by USP13.

The protein localises to the cytoplasm. It is found in the nucleus. It localises to the early endosome. It carries out the reaction Thiol-dependent hydrolysis of ester, thioester, amide, peptide and isopeptide bonds formed by the C-terminal Gly of ubiquitin (a 76-residue protein attached to proteins as an intracellular targeting signal).. Specifically inhibited by spautin-1 (specific and potent autophagy inhibitor-1), a derivative of MBCQ that binds to USP10 and inhibits deubiquitinase activity. Regulated by PIK3C3/VPS34-containing complexes. In terms of biological role, hydrolase that can remove conjugated ubiquitin from target proteins such as p53/TP53, RPS2/us5, RPS3/us3, RPS10/eS10, BECN1, SNX3 and CFTR. Acts as an essential regulator of p53/TP53 stability: in unstressed cells, specifically deubiquitinates p53/TP53 in the cytoplasm, leading to counteract MDM2 action and stabilize p53/TP53. Following DNA damage, translocates to the nucleus and deubiquitinates p53/TP53, leading to regulate the p53/TP53-dependent DNA damage response. Component of a regulatory loop that controls autophagy and p53/TP53 levels: mediates deubiquitination of BECN1, a key regulator of autophagy, leading to stabilize the PIK3C3/VPS34-containing complexes. In turn, PIK3C3/VPS34-containing complexes regulate USP10 stability, suggesting the existence of a regulatory system by which PIK3C3/VPS34-containing complexes regulate p53/TP53 protein levels via USP10 and USP13. Does not deubiquitinate MDM2. Plays a key role in 40S ribosome subunit recycling when a ribosome has stalled during translation: acts both by inhibiting formation of stress granules, which store stalled translation pre-initiation complexes, and mediating deubiquitination of 40S ribosome subunits. Acts as a negative regulator of stress granules formation by lowering G3BP1 and G3BP2 valence, thereby preventing G3BP1 and G3BP2 ability to undergo liquid-liquid phase separation (LLPS) and assembly of stress granules. Promotes 40S ribosome subunit recycling following ribosome dissociation in response to ribosome stalling by mediating deubiquitination of 40S ribosomal proteins RPS2/us5, RPS3/us3 and RPS10/eS10, thereby preventing their degradation by the proteasome. Part of a ribosome quality control that takes place when ribosomes have stalled during translation initiation (iRQC): USP10 acts by removing monoubiquitination of RPS2/us5 and RPS3/us3, promoting 40S ribosomal subunit recycling. Deubiquitinates CFTR in early endosomes, enhancing its endocytic recycling. Involved in a TANK-dependent negative feedback response to attenuate NF-kappa-B activation via deubiquitinating IKBKG or TRAF6 in response to interleukin-1-beta (IL1B) stimulation or upon DNA damage. Deubiquitinates TBX21 leading to its stabilization. Plays a negative role in the RLR signaling pathway upon RNA virus infection by blocking the RIGI-mediated MAVS activation. Mechanistically, removes the unanchored 'Lys-63'-linked polyubiquitin chains of MAVS to inhibit its aggregation, essential for its activation. The chain is Ubiquitin carboxyl-terminal hydrolase 10 (Usp10) from Rattus norvegicus (Rat).